Reading from the N-terminus, the 426-residue chain is Putative FBD-associated F-box protein At5g53635 (426 aa).

The region spanning 1–45 (MISQLPDPLICHILSHLPIKDLVTTRVLSTRWRSLWLWLPCLELN) is the F-box domain. The FBD domain occupies 353–405 (MIQFGSSLVPECLLSSLEFVDIRIPFRGHLEVMKLVRYFLENSAILKKLSLDH).

This Arabidopsis thaliana (Mouse-ear cress) protein is Putative FBD-associated F-box protein At5g53635.